The chain runs to 276 residues: Shikimate dehydrogenase (NADP(+)) (276 aa).

Residues S15–S17 and T62 each bind shikimate. K66 acts as the Proton acceptor in catalysis. NADP(+) is bound at residue E78. The shikimate site is built by N87 and D102. Residues N151 to K156 and I218 contribute to the NADP(+) site. Position 220 (Y220) interacts with shikimate. G241 contacts NADP(+).

The protein belongs to the shikimate dehydrogenase family. In terms of assembly, homodimer.

The enzyme catalyses shikimate + NADP(+) = 3-dehydroshikimate + NADPH + H(+). The protein operates within metabolic intermediate biosynthesis; chorismate biosynthesis; chorismate from D-erythrose 4-phosphate and phosphoenolpyruvate: step 4/7. Involved in the biosynthesis of the chorismate, which leads to the biosynthesis of aromatic amino acids. Catalyzes the reversible NADPH linked reduction of 3-dehydroshikimate (DHSA) to yield shikimate (SA). In Geobacillus kaustophilus (strain HTA426), this protein is Shikimate dehydrogenase (NADP(+)).